The chain runs to 92 residues: Large ribosomal subunit protein eL43 (92 aa).

A C4-type zinc finger spans residues 39-60 (CEFCGKFAVKRKAVGIWGCKDC).

Belongs to the eukaryotic ribosomal protein eL43 family.

The polypeptide is Large ribosomal subunit protein eL43 (RPL37A) (Pseudotsuga menziesii (Douglas-fir)).